A 188-amino-acid chain; its full sequence is Protein GrpE (188 aa).

Belongs to the GrpE family. Homodimer.

It is found in the cytoplasm. Participates actively in the response to hyperosmotic and heat shock by preventing the aggregation of stress-denatured proteins, in association with DnaK and GrpE. It is the nucleotide exchange factor for DnaK and may function as a thermosensor. Unfolded proteins bind initially to DnaJ; upon interaction with the DnaJ-bound protein, DnaK hydrolyzes its bound ATP, resulting in the formation of a stable complex. GrpE releases ADP from DnaK; ATP binding to DnaK triggers the release of the substrate protein, thus completing the reaction cycle. Several rounds of ATP-dependent interactions between DnaJ, DnaK and GrpE are required for fully efficient folding. The sequence is that of Protein GrpE from Chromobacterium violaceum (strain ATCC 12472 / DSM 30191 / JCM 1249 / CCUG 213 / NBRC 12614 / NCIMB 9131 / NCTC 9757 / MK).